The following is a 1890-amino-acid chain: MADSQSGSNVFSLRIVSIDYYMASPIPGYNICYSSFQGSEVNEVPVIRIYGSTPAGQKTCLHIHRALPYLYIPCSEIPLEHHKGVDGSTLALSLELEKALKLKGNAASKRQHIHDCEIVRAKKFYGYHSTEEAFVKIYLSYHPPDVARAASLLLAGAVLGKSLQPYESHIPFILQFLVDYNLYGMGHVHISKMKFRSPVPHHFRPRRFDLDDCPGQRIDEVAITKANSSAAASVSFPVWSLSTIPGQWMWNLSEESDTPLSQSQHRHQHHYRRQSLCELEGDATSSDILNQQFKMYNSLSQAQSDTNMVQSLVAIWEEEYERTGVHDAPIPPDPGKPSAADVLQTMSDYVGFGNMLKEMLNKVELSPPGMKPTAVSSAGPDMHAKPEITDLQALNHMVGTCSEFPASEQLSPLGEKSEEASMENDEYMKTPTDRDTPAQIQDAEALGLFKWFASSQAAEDINSDDEILRETILSPLLPLASINKVLEMASTDYVSQSQKECQDILDSQENLPDFGSSTKRALPSNPDSQNLRTSSDKQSLEIEVASDVPDSSTSNGASENSFRRYRKSDLHTSEVMEYKNRSFSKSNKPSNSVWGPLPFTLTKNLQKDFDSTNASDKLGLTKISSYPMNEMTDNYIVPVKEHQADVCNTIDRNVLAGCSLRDLMRKKRLCHGESPVSQHMKSRKVRDSRHGEKNECTLRCEAKKQGPALSAEFSEFVCGDTPNLSPIDSGNCECNISTESSELHSVDRCSAKETASQNSDEVLRNLSSTTVPFGKDPQTVESGTLVSSNIHVGIEIDSVQKSGREQESTANETDETGRLICLTLSKKPPSLDCLSAGLQDSAHSHEIHAREKQHDEYEGNSNDIPFFPLEDNKEEKKHFFQGTSLGIPLHHLNDGSNLYLLTPAFSPPSVDSVLQWISNDKGDSNIDSEKQPLRDNHNDRGASFTDLASASNVVSVSEHVEQHNNLFVNSESNAYTESEIDLKPKGTFLNLNLQASVSQELSQISGPDGKSGPTPLSQMGFRDPASMGAGQQLTILSIEVHAESRGDLRPDPRFDSVNVIALVVQNDDSFVAEVFVLLFSPDSIDQRNVDGLSGCKLSVFLEERQLFRYFIETLCKWDPDVLLGWDIQGGSIGFLAERAAQLGIRFLNNISRTPSPTTTNNSDNKRKLGNNLLPDPLVANPAQVEEVVIEDEWGRTHASGVHVGGRIVLNAWRLIRGEVKLNMYTIEAVSEAVLRQKVPSIPYKVLTEWFSSGPAGARYRCIEYVIRRANLNLEIMSQLDMINRTSELARVFGIDFFSVLSRGSQYRVESMLLRLAHTQNYLAISPGNQQVASQPAMECVPLVMEPESAFYDDPVIVLDFQSLYPSMIIAYNLCFSTCLGKLAHLKMNTLGVSSYSLDLDVLQDLNQILQTPNSVMYVPPEVRRGILPRLLEEILSTRIMVKKAMKKLTPSEAVLHRIFNARQLALKLIANVTYGYTAAGFSGRMPCAELADSIVQCGRSTLEKAISFVNANDNWNARVVYGDTDSMFVLLKGRTVKEAFVVGQEIASAITEMNPHPVTLKMEKVYHPCFLLTKKRYVGYSYESPNQREPIFDAKGIETVRRDTCEAVAKTMEQSLRLFFEQKNISKVKSYLYRQWKRILSGRVSLQDFIFAKEVRLGTYSTRDSSLLPPAAIVATKSMKADPRTEPRYAERVPYVVIHGEPGARLVDMVVDPLVLLDVDTPYRLNDLYYINKQIIPALQRVFGLVGADLNQWFLEMPRLTRSSLGQRPLNSKNSHKTRIDYFYLSKHCILCGEVVQESAQLCNRCLQNKSAAAATIVWKTSKLEREMQHLATICRHCGGGDWVVQSGVKCNSLACSVFYERRKVQKELRGLSSIATESELYPKCMAEWF.

Polar residues-rich tracts occupy residues 508-533 (QENLPDFGSSTKRALPSNPDSQNLRT) and 549-560 (PDSSTSNGASEN). Disordered stretches follow at residues 508 to 565 (QENL…FRRY) and 922 to 942 (GDSNIDSEKQPLRDNHNDRGA). Positions 922 to 940 (GDSNIDSEKQPLRDNHNDR) are enriched in basic and acidic residues. 4 residues coordinate Zn(2+): Cys-1789, Cys-1792, Cys-1803, and Cys-1806. A CysA-type zinc finger spans residues 1789–1806 (CILCGEVVQESAQLCNRC). [4Fe-4S] cluster contacts are provided by Cys-1835, Cys-1838, Cys-1851, and Cys-1856. Positions 1835–1856 (CRHCGGGDWVVQSGVKCNSLAC) match the CysB motif motif.

Belongs to the DNA polymerase type-B family. In terms of assembly, forms DNA polymerase zeta with REV7. Requires [4Fe-4S] cluster as cofactor. As to expression, expressed in roots, leaves and flowers.

Its subcellular location is the nucleus. The enzyme catalyses DNA(n) + a 2'-deoxyribonucleoside 5'-triphosphate = DNA(n+1) + diphosphate. In terms of biological role, catalytic subunit of the error prone DNA polymerase zeta. Involved in damage-tolerance mechanisms through translesion DNA synthesis. This is DNA polymerase zeta catalytic subunit (REV3) from Arabidopsis thaliana (Mouse-ear cress).